The primary structure comprises 601 residues: Protein CT_858 (601 aa).

Belongs to the chlamydial CPn_1016/CT_858/TC_0248 family.

This is Protein CT_858 from Chlamydia trachomatis serovar D (strain ATCC VR-885 / DSM 19411 / UW-3/Cx).